Reading from the N-terminus, the 362-residue chain is Putative F-box protein At3g25750 (362 aa).

The F-box domain maps to 4-52 (TEWSDLPEELLDLIANRYSSNIDVLRIRSTCKSWRSAVAMSKERLQFRF).

This is Putative F-box protein At3g25750 from Arabidopsis thaliana (Mouse-ear cress).